We begin with the raw amino-acid sequence, 338 residues long: 3-phosphoshikimate 1-carboxyvinyltransferase 2 (338 aa).

Arg25 contacts phosphoenolpyruvate. 3-phosphoshikimate contacts are provided by Ser72, Ser73, Gln74, Ser100, Asp225, and Lys252. Gln74 contributes to the phosphoenolpyruvate binding site. Catalysis depends on Asp225, which acts as the Proton acceptor. Phosphoenolpyruvate-binding residues include Arg256, Arg298, and Lys323.

This sequence belongs to the EPSP synthase family.

The protein localises to the plastid. The protein resides in the chloroplast. It catalyses the reaction 3-phosphoshikimate + phosphoenolpyruvate = 5-O-(1-carboxyvinyl)-3-phosphoshikimate + phosphate. It participates in metabolic intermediate biosynthesis; chorismate biosynthesis; chorismate from D-erythrose 4-phosphate and phosphoenolpyruvate: step 6/7. Catalyzes the transfer of the enolpyruvyl moiety of phosphoenolpyruvate (PEP) to the 5-hydroxyl of shikimate-3-phosphate (S3P) to produce enolpyruvyl shikimate-3-phosphate and inorganic phosphate. This Nicotiana tabacum (Common tobacco) protein is 3-phosphoshikimate 1-carboxyvinyltransferase 2 (EPSPS-2).